Consider the following 414-residue polypeptide: 2,3-bisphosphoglycerate-independent phosphoglycerate mutase (414 aa).

It belongs to the BPG-independent phosphoglycerate mutase family. A-PGAM subfamily.

It catalyses the reaction (2R)-2-phosphoglycerate = (2R)-3-phosphoglycerate. It participates in carbohydrate degradation; glycolysis; pyruvate from D-glyceraldehyde 3-phosphate: step 3/5. Functionally, catalyzes the interconversion of 2-phosphoglycerate and 3-phosphoglycerate. This chain is 2,3-bisphosphoglycerate-independent phosphoglycerate mutase, found in Saccharolobus islandicus (strain M.14.25 / Kamchatka #1) (Sulfolobus islandicus).